Consider the following 165-residue polypeptide: NADPH-dependent 7-cyano-7-deazaguanine reductase (165 aa).

The active-site Thioimide intermediate is the C56. The active-site Proton donor is D63. Substrate contacts are provided by residues 78-80 (VES) and 97-98 (HE).

This sequence belongs to the GTP cyclohydrolase I family. QueF type 1 subfamily.

The protein localises to the cytoplasm. It catalyses the reaction 7-aminomethyl-7-carbaguanine + 2 NADP(+) = 7-cyano-7-deazaguanine + 2 NADPH + 3 H(+). Its pathway is tRNA modification; tRNA-queuosine biosynthesis. Catalyzes the NADPH-dependent reduction of 7-cyano-7-deazaguanine (preQ0) to 7-aminomethyl-7-deazaguanine (preQ1). This Geobacillus thermodenitrificans (strain NG80-2) protein is NADPH-dependent 7-cyano-7-deazaguanine reductase.